A 590-amino-acid polypeptide reads, in one-letter code: RNA-binding protein 47 (590 aa).

Residues 1–21 (MTAEDSTTAMNSDPTVGSSTK) show a composition bias toward polar residues. Residues 1-26 (MTAEDSTTAMNSDPTVGSSTKVPEGV) form a disordered region. RRM domains are found at residues 71 to 149 (CEVF…CSVD), 151 to 233 (CRLF…WAEP), and 246 to 318 (KILY…LAKP). Residues Arg-396 and Arg-407 each carry the asymmetric dimethylarginine; alternate modification. 2 positions are modified to omega-N-methylarginine; alternate: Arg-396 and Arg-407.

It belongs to the RRM RBM47 family. Homodimer. Interacts with A1CF. Interacts with APOBEC1; form an mRNA editing complex. Interacts with RBPMS.

Its subcellular location is the nucleus. The protein resides in the cytoplasm. Single-stranded RNA-binding protein that functions in a variety of RNA processes, including alternative splicing, RNA stabilization, and RNA editing. Functions as an enzyme-substrate adapter for the cytidine deaminase APOBEC1. With APOBEC1 forms an mRNA editing complex involved into cytidine to uridine editing of a variety of mRNA molecules. Through the binding of their 3'UTR, also stabilizes a variety of mRNAs and regulates the expression of genes such as the interferon alpha/beta receptor and interleukin-10. Also involved in the alternative splicing of several genes including TJP1. Binds the pre-mRNA (U)GCAUG consensus sequences in downstream intronic regions of alternative exons regulating their exclusion and inclusion into mRNAs. Independently of its RNA-binding activity, could negatively regulate MAVS by promoting its lysosomal degradation. The chain is RNA-binding protein 47 from Rattus norvegicus (Rat).